We begin with the raw amino-acid sequence, 1782 residues long: AF4/FMR2 family member lilli (1782 aa).

Disordered regions lie at residues 42-84, 150-313, 434-515, 605-637, 691-732, 768-820, 839-891, 911-1064, 1091-1126, 1166-1234, 1296-1327, 1386-1420, 1450-1484, and 1674-1701; these read NMED…PSEG, ASSS…PPPE, MPTP…QQQQ, GGSSGSCMGTMSSSSSSNKTPSPTDSNRWNLSR, EKLH…QQRY, GALP…LQIP, KVQP…SNKK, VAAA…AAAS, AGNSSSSSKAKRRYSVGSSSNSSSSSETEEQQQHKQ, LPQS…KQGQ, ARQHHHQPERLKAQQNGHLSSRSAEGARTPKD, LKQELPARRRKRSSSSSSSPYKEKKRKKEKAEQLS, QESAANGSPNKLQQQQQQSRLSQSQQQQQQQQQQQ, and GNTPSSISPSNSVGSQGSGSNTPPGKIV. The segment covering 54 to 80 has biased composition (basic and acidic residues); it reads REKYERQQGIQSDDRETSLFGEPRRLN. Low complexity-rich tracts occupy residues 164 to 180 and 211 to 260; these read QQQQQQQQQQQHYQQQQ and PSSS…MSSP. Pro residues predominate over residues 435–447; it reads PTPPKASPTPPAI. T443 is modified (phosphothreonine). A compositionally biased stretch (basic and acidic residues) spans 450–463; the sequence is MKTEKNHSLEKQDS. Residues 465–475 show a composition bias toward acidic residues; that stretch reads LENDLELSESD. Phosphoserine is present on residues S472 and S474. Composition is skewed to low complexity over residues 484–515 and 609–622; these read SAGNSSNSSESDSSESGSEASSKGDTQQQQQQ and GSCMGTMSSSSSSN. Residues 623–634 are compositionally biased toward polar residues; it reads KTPSPTDSNRWN. A compositionally biased stretch (basic and acidic residues) spans 691–701; that stretch reads EKLHDEPRHVG. Low complexity-rich tracts occupy residues 714–730 and 782–805; these read QQQQQQQQQQQQQQQQQ and SDSGSASSGSGSGSSSSDSAGGSS. The span at 859 to 869 shows a compositional bias: basic residues; that stretch reads PRQKKPRKKKM. A phosphoserine mark is found at S878 and S879. Positions 920–932 form a DNA-binding region, a.T hook; sequence KKGRGRPRKQAQQ. Residues 929 to 972 show a composition bias toward low complexity; sequence QAQQQQQQQQQQLQQSGNLSSASASSSQAKGPTLTAAKKPLAKA. A phosphoserine mark is found at S949 and S951. Over residues 973-982 the composition is skewed to polar residues; that stretch reads SVSNSNSTAP. Composition is skewed to low complexity over residues 996 to 1018, 1033 to 1064, 1105 to 1116, and 1174 to 1196; these read SNSSSNSNTPTKKPTATFATMAA, SSSSSCSSTKSSSSSGSDSETPAAAAAGAAAS, SVGSSSNSSSSS, and SSSDCSSSSNSDSSSNSSGSSSS. Polar residues predominate over residues 1308–1318; that stretch reads AQQNGHLSSRS. Over residues 1450–1460 the composition is skewed to polar residues; sequence QESAANGSPNK. Residue S1457 is modified to Phosphoserine. Composition is skewed to low complexity over residues 1461-1484 and 1674-1694; these read LQQQQQQSRLSQSQQQQQQQQQQQ and GNTPSSISPSNSVGSQGSGSN.

The protein belongs to the AF4 family.

The protein localises to the nucleus. Its function is as follows. Has a role in transcriptional regulation. Acts in parallel with the Ras/MAPK and the PI3K/PKB pathways in the control of cell identity and cellular growth. Essential for regulation of the cytoskeleton and cell growth but not for cell proliferation or growth rate. Required specifically for the microtubule-based basal transport of lipid droplets. Plays a partially redundant function downstream of Raf in cell fate specification in the developing eye. Pair-rule protein that regulates embryonic cellularization, gastrulation and segmentation. This is AF4/FMR2 family member lilli from Drosophila mojavensis (Fruit fly).